The chain runs to 220 residues: Transcriptional regulatory protein SpaR (220 aa).

The 113-residue stretch at 3 to 115 (KILAVDDEKD…ELSARVNAHL (113 aa)) folds into the Response regulatory domain. Position 51 is a 4-aspartylphosphate (Asp51). Residues 124 to 220 (QSKRVISGFL…TVWGVGYKWE (97 aa)) constitute a DNA-binding region (ompR/PhoB-type).

In terms of processing, phosphorylated by SpaK.

It is found in the cytoplasm. Functionally, member of the two-component regulatory system SpaK/SpaR involved in the regulation of the biosynthesis of lantibiotic subtilin. SpaR may function as a regulatory protein. In Bacillus subtilis, this protein is Transcriptional regulatory protein SpaR (spaR).